The chain runs to 61 residues: Opistoporin-4 (61 aa).

Residues E45–Y61 constitute a propeptide that is removed on maturation.

It belongs to the non-disulfide-bridged peptide (NDBP) superfamily. Long chain multifunctional peptide (group 2) family. As to expression, expressed by the venom gland.

The protein localises to the secreted. Its subcellular location is the target cell membrane. Its function is as follows. At high concentrations, acts as a pore former in cellular membranes and causes the leakage of the cells. At submicromolar concentrations, degranulates granulocytes and has a weak hemolytic activity against human erythrocytes. Also strongly inhibits the production of superoxide anions. Has a strong antibacterial activity against Gram-negative bacteria but is less active against Gram-positive bacteria. Also has antifungal activity. This chain is Opistoporin-4, found in Opistophthalmus carinatus (African yellow leg scorpion).